Reading from the N-terminus, the 603-residue chain is Adenine deaminase (603 aa).

The protein belongs to the metallo-dependent hydrolases superfamily. Adenine deaminase family. As to quaternary structure, homodimer. Mn(2+) is required as a cofactor.

It catalyses the reaction adenine + H2O + H(+) = hypoxanthine + NH4(+). The polypeptide is Adenine deaminase (Klebsiella pneumoniae (strain 342)).